Here is a 224-residue protein sequence, read N- to C-terminus: MADNMDFKDLMADEAEDIIEKDIARVNQASEDIDQENQSEVVDDTTENEDASEEVYEEDTASEDGSKEKKSFFKKKEKKDKKDEKIDELTDRLMRNMAEFENFRKRTEKEKTQMFEVGAKDIIERILPVIDNFERGLAAVSVEEKDSAFVQGIEKIYKQLVTTLEAAGVKQIEAAGKEFDPDFHNAVMHAEDEEYGENIVAEEFQKGYMYRETVVRHSMVKVVN.

Positions 27 to 77 (NQASEDIDQENQSEVVDDTTENEDASEEVYEEDTASEDGSKEKKSFFKKKE) are disordered. Acidic residues predominate over residues 31 to 62 (EDIDQENQSEVVDDTTENEDASEEVYEEDTAS).

This sequence belongs to the GrpE family. As to quaternary structure, homodimer.

The protein resides in the cytoplasm. In terms of biological role, participates actively in the response to hyperosmotic and heat shock by preventing the aggregation of stress-denatured proteins, in association with DnaK and GrpE. It is the nucleotide exchange factor for DnaK and may function as a thermosensor. Unfolded proteins bind initially to DnaJ; upon interaction with the DnaJ-bound protein, DnaK hydrolyzes its bound ATP, resulting in the formation of a stable complex. GrpE releases ADP from DnaK; ATP binding to DnaK triggers the release of the substrate protein, thus completing the reaction cycle. Several rounds of ATP-dependent interactions between DnaJ, DnaK and GrpE are required for fully efficient folding. In Lachnoclostridium phytofermentans (strain ATCC 700394 / DSM 18823 / ISDg) (Clostridium phytofermentans), this protein is Protein GrpE.